The following is a 181-amino-acid chain: Endoribonuclease YbeY (181 aa).

Zn(2+) is bound by residues His120, His124, and His130. Residues 157-181 are disordered; that stretch reads AGGKRPAGGADGADGAGEPGPTAAR. Residues 161 to 174 show a composition bias toward gly residues; it reads RPAGGADGADGAGE.

This sequence belongs to the endoribonuclease YbeY family. Zn(2+) is required as a cofactor.

It localises to the cytoplasm. Functionally, single strand-specific metallo-endoribonuclease involved in late-stage 70S ribosome quality control and in maturation of the 3' terminus of the 16S rRNA. The chain is Endoribonuclease YbeY from Frankia alni (strain DSM 45986 / CECT 9034 / ACN14a).